Here is a 189-residue protein sequence, read N- to C-terminus: Tumor protein p53-inducible protein 11 (189 aa).

Residues 1 to 63 (MAAKQPPPLM…FAVREPLGLR (63 aa)) lie on the Cytoplasmic side of the membrane. A Phosphoserine modification is found at serine 14. Residues 64–84 (VWQFLSAMLFSSVAIMALALP) form a helical membrane-spanning segment. The Extracellular segment spans residues 85 to 108 (DQLYDAVFDGAEVTSKTPIRLYGG). The helical transmembrane segment at 109–129 (ALLSISLIMWNALYTAEKVII) threads the bilayer. A topological domain (cytoplasmic) is located at residue arginine 130. Residues 131–151 (WTLLTEACYFGVQSLVVTATL) form a helical membrane-spanning segment. Residues 152–155 (AETG) lie on the Extracellular side of the membrane. A helical membrane pass occupies residues 156–176 (LMSLGTLLLLASRLLFVIVSI). The Cytoplasmic portion of the chain corresponds to 177–189 (YYYYQVGRKPKKV).

The protein localises to the membrane. This Rattus norvegicus (Rat) protein is Tumor protein p53-inducible protein 11 (Tp53i11).